The following is an 815-amino-acid chain: Vacuolar proton translocating ATPase 100 kDa subunit (815 aa).

The Cytoplasmic portion of the chain corresponds to 1 to 402 (MSFLRPSIWR…NAYGIAHYRE (402 aa)). Residues 403-421 (VNPAVLTIVTFPFLFGVMF) traverse the membrane as a helical segment. At 422 to 423 (GD) the chain is on the vacuolar side. The chain crosses the membrane as a helical span at residues 424–440 (VGHGALLLLSALGLISL). The Cytoplasmic segment spans residues 441 to 454 (EKKLAGKKLNELIQ). A helical membrane pass occupies residues 455-484 (MPFDGRYVLFLMSLFSIYVGFIYNECFSIP). Residues 485-530 (MNIFGSQYNLNSTTGLYTYQHTDRVYPVGVDPLWKGAPNELVYYNS) lie on the Vacuolar side of the membrane. A helical membrane pass occupies residues 531–550 (FKMKLSIIFGVVQMSVGICF). Topologically, residues 551-571 (SLLNYLNQKGPIKIVNILTQF) are cytoplasmic. Residues 572–592 (VPQMIFLWSIFGYMSVLIILK) traverse the membrane as a helical segment. Residues 593 to 639 (WVVPYRSFEVDKVDPPFILPTIIAMFLSPGGTPDVVFFSGQGAVQTA) are Vacuolar-facing. The chain crosses the membrane as a helical span at residues 640 to 659 (LLFLALISIPVMLVIKPLFM). The Cytoplasmic segment spans residues 660 to 706 (KRFHFQEVERKKLGHHEEEHDDEALYTGHHGEEFEMGEVFVHQVIHT). Residues 707–731 (IEFVLGAVSNTASYLRLWALSLAHS) form a helical membrane-spanning segment. Over 732–749 (ELSSVFWERILIGQVERG) the chain is Vacuolar. Residues 750-788 (NPFLAFVGFGAWLGASVAVLLLMESLSAFLHALRLHWVE) form a helical membrane-spanning segment. Residues 789–815 (FQNKFYIGDGVRFIPYSATRILSEDDE) are Cytoplasmic-facing.

The protein belongs to the V-ATPase 116 kDa subunit family. As to quaternary structure, the V-ATPase is a heteromultimeric enzyme.

The protein localises to the cytoplasmic vesicle membrane. It localises to the endosome membrane. The protein resides in the vacuole membrane. It is found in the lysosome membrane. Functionally, essential component of the vacuolar proton pump (V-ATPase), a multimeric enzyme that catalyzes the translocation of protons across the membranes. Required for assembly and activity of the V-ATPase. Required in both the contractile vacuole system and the endosomal/lysosomal system. Also required for cytosolic pH regulation. This Dictyostelium discoideum (Social amoeba) protein is Vacuolar proton translocating ATPase 100 kDa subunit (vatM).